Here is a 124-residue protein sequence, read N- to C-terminus: Fluoride-specific ion channel FluC (124 aa).

The next 4 helical transmembrane spans lie at 4–24 (FLAV…LGLW), 34–54 (LGTL…LAWF), 67–87 (FVIT…AEVV), and 100–120 (LIAF…FYSL). 2 residues coordinate Na(+): Gly74 and Thr77.

The protein belongs to the fluoride channel Fluc/FEX (TC 1.A.43) family.

It is found in the cell inner membrane. It catalyses the reaction fluoride(in) = fluoride(out). With respect to regulation, na(+) is not transported, but it plays an essential structural role and its presence is essential for fluoride channel function. In terms of biological role, fluoride-specific ion channel. Important for reducing fluoride concentration in the cell, thus reducing its toxicity. The sequence is that of Fluoride-specific ion channel FluC from Thiobacillus denitrificans (strain ATCC 25259 / T1).